The chain runs to 478 residues: Ribulose bisphosphate carboxylase large chain (478 aa).

A propeptide spanning residues 1–2 (MS) is cleaved from the precursor. Proline 3 bears the N-acetylproline mark. Lysine 14 is subject to N6,N6,N6-trimethyllysine. The substrate site is built by asparagine 123 and threonine 173. Lysine 175 serves as the catalytic Proton acceptor. Lysine 177 is a substrate binding site. Mg(2+)-binding residues include lysine 201, aspartate 203, and glutamate 204. Lysine 201 carries the post-translational modification N6-carboxylysine. Histidine 294 (proton acceptor) is an active-site residue. The substrate site is built by arginine 295, histidine 327, and serine 379.

It belongs to the RuBisCO large chain family. Type I subfamily. In terms of assembly, heterohexadecamer of 8 large chains and 8 small chains; disulfide-linked. The disulfide link is formed within the large subunit homodimers. It depends on Mg(2+) as a cofactor. Post-translationally, the disulfide bond which can form in the large chain dimeric partners within the hexadecamer appears to be associated with oxidative stress and protein turnover.

The protein localises to the plastid. Its subcellular location is the chloroplast. It carries out the reaction 2 (2R)-3-phosphoglycerate + 2 H(+) = D-ribulose 1,5-bisphosphate + CO2 + H2O. The catalysed reaction is D-ribulose 1,5-bisphosphate + O2 = 2-phosphoglycolate + (2R)-3-phosphoglycerate + 2 H(+). RuBisCO catalyzes two reactions: the carboxylation of D-ribulose 1,5-bisphosphate, the primary event in carbon dioxide fixation, as well as the oxidative fragmentation of the pentose substrate in the photorespiration process. Both reactions occur simultaneously and in competition at the same active site. The sequence is that of Ribulose bisphosphate carboxylase large chain from Lemna minor (Common duckweed).